The sequence spans 178 residues: CRISPR system ring nuclease SSO2081 (178 aa).

The interval 105–106 (RK) is transition state stabilizer.

This sequence belongs to the cOA ring nuclease family. As to quaternary structure, homodimer. The cofactor is Does not require a metal cofactor..

The protein resides in the cytoplasm. The catalysed reaction is cyclic tetraadenylate = 2 5'-hydroxy-diadenylate 2',3'-cylic phosphate. Its function is as follows. CRISPR (clustered regularly interspaced short palindromic repeat) is an adaptive immune system that provides protection against mobile genetic elements (viruses, transposable elements and conjugative plasmids). CRISPR clusters contain spacers, sequences complementary to antecedent mobile elements, and target invading nucleic acids. CRISPR clusters are transcribed and processed into CRISPR RNA (crRNA). A nuclease that degrades cyclic oligoadenylates (cOA), second messengers that induce an antiviral state important for defense against invading nucleic acids. Destruction of cOA deactivates the Csx1 ribonuclease, preventing uncontrolled degradation of cellular RNA. Degrades cA4 (a tetraadenylate ring) into a linear diadenylate product with 5'-OH and 2',3'-cyclic phosphate termini. Is 10-fold more active than SSO1393, suggesting this is the major cA4 degradation enzyme. Is highly specific for cA4; it has very poor activity on cA6 and no discernible activity against a number of cyclic dinucleotides. There may be 2 active sites per homodimer. The protein is CRISPR system ring nuclease SSO2081 of Saccharolobus solfataricus (strain ATCC 35092 / DSM 1617 / JCM 11322 / P2) (Sulfolobus solfataricus).